Reading from the N-terminus, the 194-residue chain is uncharacterized protein (194 aa).

This sequence to A.rhizogenes plasmid pRia4B ORF-3 in virA region.

This is an uncharacterized protein from Sinorhizobium fredii (strain NBRC 101917 / NGR234).